A 377-amino-acid chain; its full sequence is Cobalt-precorrin-5B C(1)-methyltransferase (377 aa).

This sequence belongs to the CbiD family.

It carries out the reaction Co-precorrin-5B + S-adenosyl-L-methionine = Co-precorrin-6A + S-adenosyl-L-homocysteine. Its pathway is cofactor biosynthesis; adenosylcobalamin biosynthesis; cob(II)yrinate a,c-diamide from sirohydrochlorin (anaerobic route): step 6/10. Functionally, catalyzes the methylation of C-1 in cobalt-precorrin-5B to form cobalt-precorrin-6A. The protein is Cobalt-precorrin-5B C(1)-methyltransferase of Alkaliphilus metalliredigens (strain QYMF).